Reading from the N-terminus, the 612-residue chain is MSAPILTSVAWPYANGPRHIGHVAGFGVPSDVFARYQRMRGRDVLMVSGTDEHGTPLLVQAEKEGVSVQQLADTYNKQIVEDLAGLGLSYDLFTRTTTRNHYAIVQELFTTLYSNGYMVKQTTLGAISPSTGRTLPDRYIEGTCPICGAPGARGDQCDTCGNQLDPADLIDSVSKINGETPKFVETEHFLLDLPALADALGEWLESRQDWRPNVLKFSLNILKDIKPRAMTRDIDWGVPVPLEGWADNKFKKLYVWFDAVVGYLSASIEWAHRIGDPDAWKKWWTNPEAKSYYFMGKDNITFHSQIWPAEMLGYRGLGSRGGTEGKLGDLQLPTEVVSSEYLTMSGSKFSSSKGVVIYVQDFLREFGPDPLRYFIAVAGPENNDTDFTWDEFVRRNNNELANSWGNLINRTVSMAAKNFGEVPDISGLELTDDDNALLDLAEKTFDIVADNIEHSRFRAGINEAMHVVGEANAYIAAQEPWKLAKDEDQRDRLAVVLHTALQVVSDCNVLLTPYLPHAAQKVHETLGRTGEWAAMPRIDEVTDDTPVELMGVGLPEEGRTYHVITGEYSHQQAAWKRIPIEAGTTLKKPKPIFAKLDPELAETGPEWAPVVH.

Positions 12–22 match the 'HIGH' region motif; sequence PYANGPRHIGH. 4 residues coordinate Zn(2+): Cys-144, Cys-147, Cys-157, and Cys-160. Positions 348-352 match the 'KMSKS' region motif; it reads KFSSS. Ser-351 contacts ATP.

It belongs to the class-I aminoacyl-tRNA synthetase family. MetG type 1 subfamily. As to quaternary structure, monomer. The cofactor is Zn(2+).

The protein resides in the cytoplasm. The catalysed reaction is tRNA(Met) + L-methionine + ATP = L-methionyl-tRNA(Met) + AMP + diphosphate. Is required not only for elongation of protein synthesis but also for the initiation of all mRNA translation through initiator tRNA(fMet) aminoacylation. This chain is Methionine--tRNA ligase, found in Corynebacterium kroppenstedtii (strain DSM 44385 / JCM 11950 / CIP 105744 / CCUG 35717).